Here is a 412-residue protein sequence, read N- to C-terminus: CinA-like protein (412 aa).

Belongs to the CinA family.

This chain is CinA-like protein, found in Kosmotoga olearia (strain ATCC BAA-1733 / DSM 21960 / TBF 19.5.1).